The sequence spans 248 residues: Small ribosomal subunit protein uS5 (248 aa).

Residues 1–87 (MEDKKLSSAK…NPRFQRNNKD (87 aa)) form a disordered region. Residues 8–23 (SAKPATSSKPAPKAPS) are compositionally biased toward low complexity. Residues 57 to 87 (VAFEKRNFTSGDKTKKPTDSKNPRFQRNNKD) are compositionally biased toward basic and acidic residues. An S5 DRBM domain is found at 94–157 (YEEKIVDIAR…KDAHNNLVEV (64 aa)).

This sequence belongs to the universal ribosomal protein uS5 family. As to quaternary structure, part of the 30S ribosomal subunit. Contacts proteins S4 and S8.

In terms of biological role, with S4 and S12 plays an important role in translational accuracy. Functionally, located at the back of the 30S subunit body where it stabilizes the conformation of the head with respect to the body. The chain is Small ribosomal subunit protein uS5 from Mycoplasmopsis synoviae (strain 53) (Mycoplasma synoviae).